Here is a 2144-residue protein sequence, read N- to C-terminus: Cadherin EGF LAG seven-pass G-type receptor 2 (2144 aa).

Cadherin domains are found at residues 1 to 40 (EDQV…APQF), 41 to 146 (LRDS…PPVF), 147 to 248 (EQDE…PPVL), and 253 to 371 (ILFN…SPLL). The Extracellular segment spans residues 1 to 1605 (EDQVSYTLAI…GEILPLKTLT (1605 aa)). N-linked (GlcNAc...) asparagine glycosylation is found at N261, N301, N407, and N437. The EGF-like 1; calcium-binding domain maps to 453 to 511 (DDNICLREPCENYMRCVSVLRFDSSAPFIASSSVLFRPIHPVGGLRCRCPPGFTGDYCE). Intrachain disulfides connect C457–C468, C462–C499, C501–C510, C517–C528, C522–C537, C539–C548, C557–C568, C562–C578, and C580–C590. The 37-residue stretch at 513–549 (EVDLCYSRPCGPHGHCRSREGGYTCLCRDGYTGEHCE) folds into the EGF-like 2; calcium-binding domain. The 39-residue stretch at 553–591 (RSGRCTPGVCKNGGTCVNLLVGGFKCDCPSGDFEKPFCQ) folds into the EGF-like 3; calcium-binding domain. The Laminin G-like 1 domain maps to 592-796 (VTTRSFPARS…IANNGTVPGC (205 aa)). 2 N-linked (GlcNAc...) asparagine glycosylation sites follow: N726 and N790. Cystine bridges form between C770–C796, C803–C814, C808–C823, and C825–C834. Residues 799–835 (KKNVCDSNTCHNGGTCVNQWDAFSCECPLGFGGKSCA) enclose the EGF-like 4; calcium-binding domain. Position 816 is a (3R)-3-hydroxyasparagine (N816). Residues 839 to 1016 (ANPQRFLGSS…GESINVEPGC (178 aa)) enclose the Laminin G-like 2 domain. N966 carries N-linked (GlcNAc...) asparagine glycosylation. Cystine bridges form between C986–C1016, C1022–C1033, C1027–C1042, C1044–C1053, C1057–C1068, C1062–C1080, C1082–C1091, C1112–C1124, C1114–C1131, C1133–C1146, C1149–C1161, C1151–C1168, C1170–C1179, and C1182–C1194. The EGF-like 5; calcium-binding domain maps to 1018-1053 (WPDPCDSNPCPTNSYCSNDWDSYSCSCDPGYYGDNC). N1035 is subject to (3R)-3-hydroxyasparagine. A glycan (N-linked (GlcNAc...) asparagine) is linked at N1052. The EGF-like 6; calcium-binding domain maps to 1054 to 1092 (TNVCDLNPCEHQSACTRKPSAPHGYICECLPNYLGPYCE). In terms of domain architecture, EGF-like 7; calcium-binding spans 1108–1147 (TCGPCNCDVSKGFDPDCNKTSGECHCKENHYRPPSSPTCL). An N-linked (GlcNAc...) asparagine glycan is attached at N1125. Residues 1149 to 1196 (CDCYPTGSLSRVCDPEDGQCPCKPGVIGRQCDRCDNPFAEVTTNGCEV) enclose the Laminin EGF-like domain. N1249, N1268, and N1286 each carry an N-linked (GlcNAc...) asparagine glycan. Residues 1424 to 1594 (ETTVILPESV…AVLMDVSRRE (171 aa)) form the GAIN-B domain. The disordered stretch occupies residues 1439 to 1466 (PMVRSAGPGEAQETEELARRQRRHPELS). Intrachain disulfides connect C1544–C1576 and C1564–C1578. Positions 1544–1594 (CVFWNHSILVSGTGGWSARGCEVVFRNESHVSCQCNHMTSFAVLMDVSRRE) are GPS. 2 N-linked (GlcNAc...) asparagine glycosylation sites follow: N1548 and N1570. The chain crosses the membrane as a helical span at residues 1606–1626 (YVALGVTLAALMITFLFLTLL). Topologically, residues 1627–1641 (RALRSNQHGIRRNLT) are cytoplasmic. Residues 1642 to 1662 (AALGLAQLVFLLGINQADLPF) traverse the membrane as a helical segment. Residue A1663 is a topological domain, extracellular. Residues 1664–1684 (CTVIAILLHFLYLCTFSWALL) form a helical membrane-spanning segment. Residues 1685-1705 (EALHLYRALTEVRDVNASPMR) are Cytoplasmic-facing. A helical membrane pass occupies residues 1706-1726 (FYYMLGWGVPAFITGLAVGLD). Residues 1727–1744 (PEGYGNPDFCWLSIYDTL) lie on the Extracellular side of the membrane. Residues 1745–1765 (IWSFAGPVAFAVSMSVFLYIL) form a helical membrane-spanning segment. Residues 1766–1789 (SARASCAAQRQGFEKKGPVSGLRS) lie on the Cytoplasmic side of the membrane. The chain crosses the membrane as a helical span at residues 1790 to 1810 (SFTVLLLLSATWLLALLSVNS). Topologically, residues 1811-1816 (DTLLFH) are extracellular. A helical transmembrane segment spans residues 1817–1837 (YLFAACNCVQGPFIFLSYVVL). The Cytoplasmic segment spans residues 1838–2144 (SKEVRKALKF…SEFLFFNFLH (307 aa)). Residues 1914–2109 (TLNPGQVPPG…PPRPPPRQSL (196 aa)) are disordered. The span at 1943-1955 (TDSDSDLSLEDDQ) shows a compositional bias: acidic residues. A compositionally biased stretch (polar residues) spans 2016 to 2025 (GTTTKENSGS). Residues 2028 to 2040 (LEERPRENGDALT) are compositionally biased toward basic and acidic residues. The segment covering 2082 to 2095 (GTGSSRGSTASEGS) has biased composition (polar residues).

It belongs to the G-protein coupled receptor 2 family. LN-TM7 subfamily. As to quaternary structure, heterodimer of 2 chains generated by proteolytic processing; the large extracellular N-terminal fragment and the membrane-bound C-terminal fragment predominantly remain associated and non-covalently linked. The iron and 2-oxoglutarate dependent 3-hydroxylation of aspartate and asparagine is (R) stereospecific within EGF domains. Post-translationally, autoproteolytically processed at the GPS region of the GAIN-B domain; this cleavage modulates receptor activity. Expressed in the brain. High expression in cerebellum and olfactory bulb. Weaker expression in cerebral cortex, hippocampus and brain stem.

Its subcellular location is the cell membrane. Functionally, receptor that may have an important role in cell/cell signaling during nervous system formation. The chain is Cadherin EGF LAG seven-pass G-type receptor 2 from Rattus norvegicus (Rat).